Consider the following 125-residue polypeptide: Histone H2A (125 aa).

The span at M1–S18 shows a compositional bias: basic residues. The disordered stretch occupies residues M1–L23. S2 is modified (N-acetylserine). S2 carries the post-translational modification Phosphoserine. An N5-methylglutamine modification is found at Q104.

This sequence belongs to the histone H2A family. In terms of assembly, the nucleosome is a histone octamer containing two molecules each of H2A, H2B, H3 and H4 assembled in one H3-H4 heterotetramer and two H2A-H2B heterodimers. The octamer wraps approximately 147 bp of DNA.

The protein resides in the nucleus. It is found in the chromosome. Core component of nucleosome. Nucleosomes wrap and compact DNA into chromatin, limiting DNA accessibility to the cellular machineries which require DNA as a template. Histones thereby play a central role in transcription regulation, DNA repair, DNA replication and chromosomal stability. DNA accessibility is regulated via a complex set of post-translational modifications of histones, also called histone code, and nucleosome remodeling. The polypeptide is Histone H2A (Urechis caupo (Innkeeper worm)).